The chain runs to 329 residues: BTB/POZ domain-containing adapter for CUL3-mediated RhoA degradation protein 1 (329 aa).

The span at 1–15 (MSAEASGPAAAEAPS) shows a compositional bias: low complexity. The disordered stretch occupies residues 1–21 (MSAEASGPAAAEAPSLEVAKP). Positions 41–109 (KYVKLNVGGS…LRDGSVPLPE (69 aa)) constitute a BTB domain. Positions 280–302 (LEATGGAAGGGGASRGEDEDNRE) are disordered.

The protein belongs to the BACURD family. As to quaternary structure, homotetramer; forms a two-fold symmetric tetramer in solution. Interacts with CUL3; interaction is direct and forms a 5:5 heterodecamer. Component of the BCR(KCTD13) E3 ubiquitin ligase complex, at least composed of CUL3, KCTD13/BACURD1 and RBX1. Interacts with RHOA; with a preference for RhoA-GDP. Interacts with POLD2 and PCNA. Interacts with SPRTN.

Its subcellular location is the nucleus. It participates in protein modification; protein ubiquitination. Its function is as follows. Substrate-specific adapter of a BCR (BTB-CUL3-RBX1) E3 ubiquitin-protein ligase complex required for synaptic transmission. The BCR(KCTD13) E3 ubiquitin ligase complex mediates the ubiquitination of RHOA, leading to its degradation by the proteasome, thereby regulating the actin cytoskeleton and promoting synaptic transmission. This is BTB/POZ domain-containing adapter for CUL3-mediated RhoA degradation protein 1 (KCTD13) from Bos taurus (Bovine).